Consider the following 927-residue polypeptide: MKFGKYLESQVEANRYVDYKGIRKSLKRFKSEIESLNIHISELKAYNLNNATSKINSKQPSPTTATATTTTIGISSSNGGSNLLRNSISTSKFMNLSQTPLGSSTPMPSDQITAINTSKSILESMEQLKEIQDRLVKSLTDEVSKVNDFYMEREKEAQERFDKLKIQVPLYLKSKEKQRRENEKELNDHDELLSYSESYHYSKKKNKLNNNNNNNNNNNNNNNNTTSPPPLSHDQQHLQQPEIKRINQHHAVLNLTPIKSTPLSPKQQDGSSKKEVKISLLSSPILEEEEEEEEEEDDNIHDQDPEVIEMATVYHYDEDELEEVLSDNCNDNGASDEFNGSVNNNGAGSGGGGNNNSSSELNLTFDIIGSKISKSLKEISTHVVKPTTTFFQPLGDRAKRFMSMGKQKSDEALLKEAFREYYHFLVILKNYQVINYTGFVKIIKKSEKNTGLSIGSQVMSFIESQQFRQSKKIERLTSSIEKIHSELFNNGKIRDARKQLRNSEHVSQQSPTISNFFSGVCAGWTSALLMLIYYFIYTKEFDDFVRFSSIYNVYSAFGLVLLWAFIFGIDCWVWTKSHVHYSFIFELSKNKFNHVKIFQAVTLLSVMWITSIGVYMWQSVSGDDFPFPFVPPEYNPLVLFGAYMLILVCPFNIFQLSVRKWFLNTVFRVLTAPIKSVKFKDFFMGDQLSSLVLMIVQFAQFVCFYTYDVYRPEHSGGCIRYARYFNPFISGLPAYCRLMQCFRRYYDSYDSTTGKGDTVHLRNAVKYSLSIVVVVCSTLDGFFSGDSGWHSPYRLIWVVAGVSNSMYSYWWDLICDWSIVVRPKGQHWNPFKWTLRKRRMYQPTFVYYFAIFSNLGFRTTWTFTKSLPQLTNILPSYKLVVVIGIIEILRRGQWNIFRLENEHLNNCGKFRVTREIPLPYQIRDNEN.

The region spanning 1–460 is the SPX domain; it reads MKFGKYLESQ…GLSIGSQVMS (460 aa). Disordered regions lie at residues 54–78, 204–239, 257–305, and 326–355; these read KINSKQPSPTTATATTTTIGISSSN, KKNKLNNNNNNNNNNNNNNNNTTSPPPLSHDQQHLQ, PIKS…DQDP, and SDNCNDNGASDEFNGSVNNNGAGSGGGGNN. 2 stretches are compositionally biased toward low complexity: residues 60–78 and 208–224; these read PSPTTATATTTTIGISSSN and LNNNNNNNNNNNNNNNN. The span at 257–270 shows a compositional bias: polar residues; that stretch reads PIKSTPLSPKQQDG. Positions 286-299 are enriched in acidic residues; sequence LEEEEEEEEEEDDN. A run of 8 helical transmembrane segments spans residues 516–536, 553–573, 597–617, 636–656, 682–702, 769–789, 845–862, and 869–889; these read FFSGVCAGWTSALLMLIYYFI, VYSAFGLVLLWAFIFGIDCWV, IFQAVTLLSVMWITSIGVYMW, PLVLFGAYMLILVCPFNIFQL, FFMGDQLSSLVLMIVQFAQFV, LSIVVVVCSTLDGFFSGDSGW, FVYYFAIFSNLGFRTTWT, and QLTNILPSYKLVVVIGIIEIL. Residues 717–927 enclose the EXS domain; that stretch reads GCIRYARYFN…LPYQIRDNEN (211 aa).

Belongs to the SYG1 (TC 2.A.94) family.

Its subcellular location is the membrane. This chain is SPX and EXS domain-containing protein 5, found in Dictyostelium discoideum (Social amoeba).